Consider the following 118-residue polypeptide: uncharacterized protein (118 aa).

This is an uncharacterized protein from Saccharomyces cerevisiae (strain ATCC 204508 / S288c) (Baker's yeast).